Consider the following 626-residue polypeptide: Basic helix-loop-helix ARNT-like protein 1 (626 aa).

The segment at 1–60 (MADQRMDISSTISDFMSPGATDLLSSPLGTSGMDCNRKRKGSSTDYQESMDTDKDDPHGR) is disordered. Ser-17 is subject to Phosphoserine; by GSK3-beta. A Phosphothreonine; by GSK3-beta modification is found at Thr-21. The short motif at 36–41 (NRKRKG) is the Nuclear localization signal element. Residues 51-60 (DTDKDDPHGR) are compositionally biased toward basic and acidic residues. One can recognise a bHLH domain in the interval 72–125 (NAREAHSQIEKRRRDKMNSFIDELASLVPTCNAMSRKLDKLTVLRMAVQHMKTL). Ser-78 carries the post-translational modification Phosphoserine. Residue Ser-90 is modified to Phosphoserine; by CK2. A Nuclear export signal 1 motif is present at residues 142-152 (LSDDELKHLIL). In terms of domain architecture, PAS 1 spans 143-215 (SDDELKHLIL…EQLSSSDTAP (73 aa)). Lys-252 is covalently cross-linked (Glycyl lysine isopeptide (Lys-Gly) (interchain with G-Cter in SUMO2 and SUMO3)). A Glycyl lysine isopeptide (Lys-Gly) (interchain with G-Cter in SUMO); alternate cross-link involves residue Lys-259. Residue Lys-259 forms a Glycyl lysine isopeptide (Lys-Gly) (interchain with G-Cter in SUMO2); alternate linkage. Positions 326-396 (PQPVNGEIRV…ECHRQVLQTR (71 aa)) constitute a PAS 2 domain. A Nuclear export signal 2 motif is present at residues 361-369 (LAYLPQELL). In terms of domain architecture, PAC spans 401–444 (TNCYKFKIKDGSFITLRSRWFSFMNPWTKEVEYIVSTNTVVLAN). Disordered stretches follow at residues 457 to 493 (TASPHSMDSMLPSGEGGPKRTHPTVPGIPGGTRAGAG) and 510 to 597 (RGSS…SNDE). Over residues 484 to 493 (IPGGTRAGAG) the composition is skewed to gly residues. The interaction with CIART stretch occupies residues 508 to 588 (RIRGSSPSSC…IGIDMIDNDQ (81 aa)). Positions 511 to 521 (GSSPSSCGSSP) are enriched in low complexity. The residue at position 538 (Lys-538) is an N6-acetyllysine.

As to quaternary structure, component of the circadian clock oscillator which includes the CRY1/2 proteins, CLOCK or NPAS2, BMAL1 or BMAL2, CSNK1D and/or CSNK1E, TIMELESS and the PER1/2/3 proteins. Forms a heterodimer with CLOCK. The CLOCK-BMAL1 heterodimer is required for E-box-dependent transactivation, for CLOCK nuclear translocation and degradation, and, for phosphorylation of both CLOCK and BMAL1. Part of a nuclear complex which also includes RACK1 and PRKCA; RACK1 and PRKCA are recruited to the complex in a circadian manner. Interacts with NPAS2. Interacts with EZH2. Interacts with SUMO3. Interacts with SIRT1. Interacts with AHR. Interacts with ID1, ID2 and ID3. Interacts with DDX4. Interacts with OGT. Interacts with EED and SUZ12. Interacts with MTA1. Interacts with CIART. Interacts with HSP90. Interacts with KAT2B and EP300. Interacts with BHLHE40/DEC1 and BHLHE41/DEC2. Interacts with RELB and the interaction is enhanced in the presence of CLOCK. Interacts with PER1, PER2, CRY1 and CRY2 and this interaction requires a translocation to the nucleus. Interaction of the CLOCK-BMAL1 heterodimer with PER or CRY inhibits transcription activation. Interaction of the CLOCK-BMAL1 with CRY1 is independent of DNA but with PER2 is off DNA. The CLOCK-BMAL1 heterodimer interacts with GSK3B. Interacts with KDM5A. Interacts with KMT2A; in a circadian manner. Interacts with UBE3A. Interacts with PRKCG. Interacts with MAGEL2. Interacts with NCOA2. Interacts with THRAP3. The CLOCK-BMAL1 heterodimer interacts with PASD1. Interacts with PASD1. Interacts with USP9X. Interacts with PIWIL2 (via PIWI domain). Interacts with HDAC3. Interacts with HNF4A. In terms of processing, ubiquitinated, leading to its proteasomal degradation. Deubiquitinated by USP9X. Post-translationally, O-glycosylated; contains O-GlcNAc. O-glycosylation by OGT prevents protein degradation by inhibiting ubiquitination. It also stabilizes the CLOCK-BMAL1 heterodimer thereby increasing CLOCK-BMAL1-mediated transcription of genes in the negative loop of the circadian clock such as PER1/2/3 and CRY1/2. Acetylated on Lys-538 by CLOCK during the repression phase of the circadian cycle. Acetylation facilitates recruitment of CRY1 protein and initiates the repression phase of the circadian cycle. Acetylated at Lys-538 by KAT5 during the activation phase of the cycle, leading to recruitment of the positive transcription elongation factor b (P-TEFb) and BRD4, followed by productive elongation of circadian transcripts. Deacetylated by SIRT1, which may result in decreased protein stability. In terms of processing, phosphorylated upon dimerization with CLOCK. Phosphorylation enhances the transcriptional activity, alters the subcellular localization and decreases the stability of the CLOCK-BMAL1 heterodimer by promoting its degradation. Phosphorylation shows circadian variations in the liver with a peak between CT10 to CT14. Phosphorylation at Ser-90 by CK2 is essential for its nuclear localization, its interaction with CLOCK and controls CLOCK nuclear entry. Dephosphorylation at Ser-78 is important for dimerization with CLOCK and transcriptional activity. Post-translationally, sumoylated on Lys-259 upon dimerization with CLOCK. Predominantly conjugated to poly-SUMO2/3 rather than SUMO1 and the level of these conjugates undergo rhythmic variation, peaking at CT9-CT12. Sumoylation localizes it exclusively to the PML body and promotes its ubiquitination in the PML body, ubiquitin-dependent proteasomal degradation and the transcriptional activity of the CLOCK-BMAL1 heterodimer. Undergoes lysosome-mediated degradation in a time-dependent manner in the liver.

It is found in the nucleus. Its subcellular location is the cytoplasm. The protein resides in the PML body. Transcriptional activator which forms a core component of the circadian clock. The circadian clock, an internal time-keeping system, regulates various physiological processes through the generation of approximately 24 hour circadian rhythms in gene expression, which are translated into rhythms in metabolism and behavior. It is derived from the Latin roots 'circa' (about) and 'diem' (day) and acts as an important regulator of a wide array of physiological functions including metabolism, sleep, body temperature, blood pressure, endocrine, immune, cardiovascular, and renal function. Consists of two major components: the central clock, residing in the suprachiasmatic nucleus (SCN) of the brain, and the peripheral clocks that are present in nearly every tissue and organ system. Both the central and peripheral clocks can be reset by environmental cues, also known as Zeitgebers (German for 'timegivers'). The predominant Zeitgeber for the central clock is light, which is sensed by retina and signals directly to the SCN. The central clock entrains the peripheral clocks through neuronal and hormonal signals, body temperature and feeding-related cues, aligning all clocks with the external light/dark cycle. Circadian rhythms allow an organism to achieve temporal homeostasis with its environment at the molecular level by regulating gene expression to create a peak of protein expression once every 24 hours to control when a particular physiological process is most active with respect to the solar day. Transcription and translation of core clock components (CLOCK, NPAS2, BMAL1, BMAL2, PER1, PER2, PER3, CRY1 and CRY2) plays a critical role in rhythm generation, whereas delays imposed by post-translational modifications (PTMs) are important for determining the period (tau) of the rhythms (tau refers to the period of a rhythm and is the length, in time, of one complete cycle). A diurnal rhythm is synchronized with the day/night cycle, while the ultradian and infradian rhythms have a period shorter and longer than 24 hours, respectively. Disruptions in the circadian rhythms contribute to the pathology of cardiovascular diseases, cancer, metabolic syndromes and aging. A transcription/translation feedback loop (TTFL) forms the core of the molecular circadian clock mechanism. Transcription factors, CLOCK or NPAS2 and BMAL1 or BMAL2, form the positive limb of the feedback loop, act in the form of a heterodimer and activate the transcription of core clock genes and clock-controlled genes (involved in key metabolic processes), harboring E-box elements (5'-CACGTG-3') within their promoters. The core clock genes: PER1/2/3 and CRY1/2 which are transcriptional repressors form the negative limb of the feedback loop and interact with the CLOCK|NPAS2-BMAL1|BMAL2 heterodimer inhibiting its activity and thereby negatively regulating their own expression. This heterodimer also activates nuclear receptors NR1D1, NR1D2, RORA, RORB and RORG, which form a second feedback loop and which activate and repress BMAL1 transcription, respectively. BMAL1 positively regulates myogenesis and negatively regulates adipogenesis via the transcriptional control of the genes of the canonical Wnt signaling pathway. Plays a role in normal pancreatic beta-cell function; regulates glucose-stimulated insulin secretion via the regulation of antioxidant genes NFE2L2/NRF2 and its targets SESN2, PRDX3, CCLC and CCLM. Negatively regulates the mTORC1 signaling pathway; regulates the expression of MTOR and DEPTOR. Controls diurnal oscillations of Ly6C inflammatory monocytes; rhythmic recruitment of the PRC2 complex imparts diurnal variation to chemokine expression that is necessary to sustain Ly6C monocyte rhythms. Regulates the expression of HSD3B2, STAR, PTGS2, CYP11A1, CYP19A1 and LHCGR in the ovary and also the genes involved in hair growth. Plays an important role in adult hippocampal neurogenesis by regulating the timely entry of neural stem/progenitor cells (NSPCs) into the cell cycle and the number of cell divisions that take place prior to cell-cycle exit. Regulates the circadian expression of CIART. The CLOCK-BMAL1 heterodimer regulates the circadian expression of SERPINE1/PAI1, VWF, B3, CCRN4L/NOC, NAMPT, DBP, MYOD1, PPARGC1A, PPARGC1B, SIRT1, GYS2, F7, NGFR, GNRHR, BHLHE40/DEC1, ATF4, MTA1 and also genes implicated in glucose and lipid metabolism. Promotes rhythmic chromatin opening, regulating the DNA accessibility of other transcription factors. The NPAS2-BMAL1 heterodimer positively regulates the expression of MAOA, F7 and LDHA and modulates the circadian rhythm of daytime contrast sensitivity by regulating the rhythmic expression of adenylate cyclase type 1 (ADCY1) in the retina. The preferred binding motif for the CLOCK-BMAL1 heterodimer is 5'-CACGTGA-3', which contains a flanking adenine nucleotide at the 3-prime end of the canonical 6-nucleotide E-box sequence. CLOCK specifically binds to the half-site 5'-CAC-3', while BMAL1 binds to the half-site 5'-GTGA-3'. The CLOCK-BMAL1 heterodimer also recognizes the non-canonical E-box motifs 5'-AACGTGA-3' and 5'-CATGTGA-3'. Essential for the rhythmic interaction of CLOCK with ASS1 and plays a critical role in positively regulating CLOCK-mediated acetylation of ASS1. Plays a role in protecting against lethal sepsis by limiting the expression of immune checkpoint protein CD274 in macrophages in a PKM2-dependent manner. Regulates the diurnal rhythms of skeletal muscle metabolism via transcriptional activation of genes promoting triglyceride synthesis (DGAT2) and metabolic efficiency (COQ10B). The chain is Basic helix-loop-helix ARNT-like protein 1 (BMAL1) from Equus caballus (Horse).